Reading from the N-terminus, the 181-residue chain is 6,7-dimethyl-8-ribityllumazine synthase (181 aa).

5-amino-6-(D-ribitylamino)uracil-binding positions include tyrosine 27, 58–60 (ALE), and 87–89 (CVI). A (2S)-2-hydroxy-3-oxobutyl phosphate-binding site is contributed by 92 to 93 (ET). Catalysis depends on histidine 95, which acts as the Proton donor. Asparagine 120 is a binding site for 5-amino-6-(D-ribitylamino)uracil. Residue arginine 134 coordinates (2S)-2-hydroxy-3-oxobutyl phosphate.

The protein belongs to the DMRL synthase family.

It catalyses the reaction (2S)-2-hydroxy-3-oxobutyl phosphate + 5-amino-6-(D-ribitylamino)uracil = 6,7-dimethyl-8-(1-D-ribityl)lumazine + phosphate + 2 H2O + H(+). Its pathway is cofactor biosynthesis; riboflavin biosynthesis; riboflavin from 2-hydroxy-3-oxobutyl phosphate and 5-amino-6-(D-ribitylamino)uracil: step 1/2. In terms of biological role, catalyzes the formation of 6,7-dimethyl-8-ribityllumazine by condensation of 5-amino-6-(D-ribitylamino)uracil with 3,4-dihydroxy-2-butanone 4-phosphate. This is the penultimate step in the biosynthesis of riboflavin. In Methylobacterium nodulans (strain LMG 21967 / CNCM I-2342 / ORS 2060), this protein is 6,7-dimethyl-8-ribityllumazine synthase.